We begin with the raw amino-acid sequence, 312 residues long: Tetraspanin-17 (312 aa).

4 consecutive transmembrane segments (helical) span residues 17-37, 64-84, 89-109, and 274-294; these read IFSI…LWML, VSLV…CGAV, FLLL…VAMG, and IWIF…GICL.

It belongs to the tetraspanin (TM4SF) family. In terms of tissue distribution, expressed in dopaminergic neurons, head muscles, vulva and spermatheca.

The protein resides in the cell membrane. It is found in the cell projection. It localises to the dendrite. Its subcellular location is the axon. In terms of biological role, protects dopaminergic neurons against oxidative stress-induced neurodegeneration. May act partly via dopamine receptor dop-2 to negatively regulate dopamine reuptake transporter dat-1 activity. Also plays a role in modulating behaviors linked to dopamine signaling. Confers protection against oxidative stress in the whole body. The protein is Tetraspanin-17 of Caenorhabditis elegans.